A 1173-amino-acid polypeptide reads, in one-letter code: DNA-directed RNA polymerase subunit beta (1173 aa).

It belongs to the RNA polymerase beta chain family. The RNAP catalytic core consists of 2 alpha, 1 beta, 1 beta' and 1 omega subunit. When a sigma factor is associated with the core the holoenzyme is formed, which can initiate transcription.

The catalysed reaction is RNA(n) + a ribonucleoside 5'-triphosphate = RNA(n+1) + diphosphate. Functionally, DNA-dependent RNA polymerase catalyzes the transcription of DNA into RNA using the four ribonucleoside triphosphates as substrates. The polypeptide is DNA-directed RNA polymerase subunit beta (Kosmotoga olearia (strain ATCC BAA-1733 / DSM 21960 / TBF 19.5.1)).